The sequence spans 333 residues: Probable HTH-type transcriptional repressor ExuR (333 aa).

The region spanning 2-56 (VTIKDIAKLANVSHTTVSRALNNSPYIKEHTKKKILELAEQLNYTPNVNAKSLAM) is the HTH lacI-type domain. Positions 4 to 23 (IKDIAKLANVSHTTVSRALN) form a DNA-binding region, H-T-H motif.

In terms of biological role, transcriptional repressor for the exu locus which is required for galacturonate utilization. This chain is Probable HTH-type transcriptional repressor ExuR (exuR), found in Bacillus subtilis (strain 168).